Reading from the N-terminus, the 657-residue chain is Autophagy-related protein 22 (657 aa).

A compositionally biased stretch (low complexity) spans 1 to 15; that stretch reads MAPNLQPQPQSQLQR. Residues 1-78 are disordered; sequence MAPNLQPQPQ…VVPRHFGHDA (78 aa). Residues 1 to 91 lie on the Cytoplasmic side of the membrane; it reads MAPNLQPQPQ…SRRELLGWYA (91 aa). The segment covering 26-40 has biased composition (polar residues); sequence GLSNISKRSFRSCAT. Residues 92–112 traverse the membrane as a helical segment; it reads YAFAAETYVICGIASFIPILL. The Vacuolar segment spans residues 113–155; sequence ETLARENGVLVSDRKTPCGSSDSKNDGDGQCIVWVFGMEINTA. The chain crosses the membrane as a helical span at residues 156-176; the sequence is SFAMYTFSVSVLVQALLVVSI. The Cytoplasmic portion of the chain corresponds to 177 to 187; sequence SCAADHGNYRK. Residues 188–208 form a helical membrane-spanning segment; it reads KLLLTFAWIGSFAVMSYIFIT. At 209 to 212 the chain is on the vacuolar side; that stretch reads KDNY. A helical membrane pass occupies residues 213-233; it reads ILGALLTVISNTSFGASFVLL. At 234–317 the chain is on the cytoplasmic side; it reads NSFLPLLVRY…ELELSTRISA (84 aa). Residues 318-338 traverse the membrane as a helical segment; that stretch reads IGIGTGYIAALFLQCICIGVL. At 339–349 the chain is on the vacuolar side; it reads ISLHNTTWGQR. Residue Asn-343 is glycosylated (N-linked (GlcNAc...) asparagine). Residues 350–370 traverse the membrane as a helical segment; it reads VVLFMVGVWWTVFTIPAAMWL. Residues 371–384 are Cytoplasmic-facing; it reads RPRPGPPLADNGRK. The chain crosses the membrane as a helical span at residues 385 to 405; it reads GIMAGLAYILYAWKSLFKTIQ. At 406-409 the chain is on the vacuolar side; the sequence is QARR. Residues 410-430 traverse the membrane as a helical segment; that stretch reads LLDIVLFLAGWFLLSDAIATT. The Cytoplasmic portion of the chain corresponds to 431-446; the sequence is SSTAILFAKTQLHMKP. A helical membrane pass occupies residues 447-467; it reads WALGMINVISTTAGVFGAFGW. Residues 468 to 481 are Vacuolar-facing; the sequence is SWVSRLFNLKAHQT. The helical transmembrane segment at 482–502 threads the bilayer; the sequence is ILVCIALFELIPLYGLLGYLP. At 503–515 the chain is on the cytoplasmic side; that stretch reads FVKNWGVFGLQQP. Residues 516-536 traverse the membrane as a helical segment; it reads WEMYPLAAVYGVVLGGLSGYC. Over 537-554 the chain is Vacuolar; that stretch reads RSLYGELIPPGSEAAFYA. Residues 555-575 form a helical membrane-spanning segment; it reads LYAITDKGSSVFGPTIVGAII. Over 576-583 the chain is Cytoplasmic; the sequence is DRTGTIRP. The chain crosses the membrane as a helical span at residues 584–604; that stretch reads AFWFLAVLVGFPAPLIWFIDV. Over 605 to 657 the chain is Vacuolar; sequence ERGRREGAKLAKSITDSIVQEEDESDDGAERRGMLSDYEREHGQSIDDERAGR. The tract at residues 615–657 is disordered; that stretch reads AKSITDSIVQEEDESDDGAERRGMLSDYEREHGQSIDDERAGR. Over residues 632–657 the composition is skewed to basic and acidic residues; the sequence is GAERRGMLSDYEREHGQSIDDERAGR.

The protein belongs to the ATG22 family.

The protein localises to the vacuole membrane. In terms of biological role, vacuolar effluxer which mediate the efflux of leucine and other amino acids resulting from autophagic degradation. The release of autophagic amino acids allows the maintenance of protein synthesis and viability during nitrogen starvation. Autophagy is required for proper vegetative growth, asexual/sexual reproduction, and full virulence. Autophagy is particularly involved in the biosynthesis of deoxynivalenol (DON), an important virulence determinant. In Gibberella zeae (strain ATCC MYA-4620 / CBS 123657 / FGSC 9075 / NRRL 31084 / PH-1) (Wheat head blight fungus), this protein is Autophagy-related protein 22.